A 459-amino-acid chain; its full sequence is Cysteine--tRNA ligase (459 aa).

Cys28 provides a ligand contact to Zn(2+). Residues 30-40 (VTVYDLCHIGH) carry the 'HIGH' region motif. 3 residues coordinate Zn(2+): Cys209, His234, and Glu238. Positions 266 to 270 (KMSKS) match the 'KMSKS' region motif. ATP is bound at residue Lys269.

It belongs to the class-I aminoacyl-tRNA synthetase family. In terms of assembly, monomer. The cofactor is Zn(2+).

The protein resides in the cytoplasm. It carries out the reaction tRNA(Cys) + L-cysteine + ATP = L-cysteinyl-tRNA(Cys) + AMP + diphosphate. This chain is Cysteine--tRNA ligase (cysS), found in Haemophilus influenzae (strain ATCC 51907 / DSM 11121 / KW20 / Rd).